We begin with the raw amino-acid sequence, 351 residues long: Autoinducer 2 import system permease protein LsrC (351 aa).

Helical transmembrane passes span 14–34 (LLAI…YFSL), 39–59 (MIFS…LVML), 70–90 (ITGL…GLVA), 93–113 (LFAL…VTWL), 115–135 (IPAI…MLLL), 155–175 (ILFS…SMAW), 213–233 (MNGV…GFIP), 252–272 (GISL…AFLL), and 284–304 (LPAW…LVFD).

This sequence belongs to the binding-protein-dependent transport system permease family. AraH/RbsC subfamily. The complex is composed of two ATP-binding proteins (LsrA), two transmembrane proteins (LsrC and LsrD) and a solute-binding protein (LsrB).

The protein resides in the cell inner membrane. In terms of biological role, part of the ABC transporter complex LsrABCD involved in autoinducer 2 (AI-2) import. Probably responsible for the translocation of the substrate across the membrane. The chain is Autoinducer 2 import system permease protein LsrC (lsrC) from Yersinia pseudotuberculosis serotype IB (strain PB1/+).